The following is a 107-amino-acid chain: Phosphoribosyl-ATP pyrophosphatase (107 aa).

This sequence belongs to the PRA-PH family.

It is found in the cytoplasm. It carries out the reaction 1-(5-phospho-beta-D-ribosyl)-ATP + H2O = 1-(5-phospho-beta-D-ribosyl)-5'-AMP + diphosphate + H(+). The protein operates within amino-acid biosynthesis; L-histidine biosynthesis; L-histidine from 5-phospho-alpha-D-ribose 1-diphosphate: step 2/9. The protein is Phosphoribosyl-ATP pyrophosphatase of Bacillus anthracis (strain A0248).